Here is a 409-residue protein sequence, read N- to C-terminus: 23S rRNA (uracil(747)-C(5))-methyltransferase (409 aa).

[4Fe-4S] cluster contacts are provided by cysteine 61, cysteine 67, cysteine 70, and cysteine 137. S-adenosyl-L-methionine contacts are provided by glutamine 251, tyrosine 277, glutamate 298, and aspartate 339. Cysteine 365 acts as the Nucleophile in catalysis.

Belongs to the class I-like SAM-binding methyltransferase superfamily. RNA M5U methyltransferase family.

It catalyses the reaction uridine(747) in 23S rRNA + S-adenosyl-L-methionine = 5-methyluridine(747) in 23S rRNA + S-adenosyl-L-homocysteine + H(+). Its function is as follows. Catalyzes the formation of 5-methyl-uridine at position equivalent to 747 (m5U747) in 23S rRNA. This is 23S rRNA (uracil(747)-C(5))-methyltransferase from Pyrococcus furiosus (strain ATCC 43587 / DSM 3638 / JCM 8422 / Vc1).